The chain runs to 118 residues: Small ribosomal subunit protein uS13 (118 aa).

The interval 94-118 (SLPLRGQRTKTNARTRKGPRKPIKR) is disordered.

It belongs to the universal ribosomal protein uS13 family. Part of the 30S ribosomal subunit. Forms a loose heterodimer with protein S19. Forms two bridges to the 50S subunit in the 70S ribosome.

Located at the top of the head of the 30S subunit, it contacts several helices of the 16S rRNA. In the 70S ribosome it contacts the 23S rRNA (bridge B1a) and protein L5 of the 50S subunit (bridge B1b), connecting the 2 subunits; these bridges are implicated in subunit movement. Contacts the tRNAs in the A and P-sites. The chain is Small ribosomal subunit protein uS13 from Pseudoalteromonas translucida (strain TAC 125).